We begin with the raw amino-acid sequence, 296 residues long: Coiled-coil domain-containing protein 69 (296 aa).

A compositionally biased stretch (basic residues) spans 1–18; the sequence is MGCRHSRLSSCKPPKKKR. The tract at residues 1-41 is disordered; that stretch reads MGCRHSRLSSCKPPKKKRQEPEPEQPPRPEPHELGPLNGDT. Residue Gly-2 is the site of N-myristoyl glycine attachment. The span at 19–33 shows a compositional bias: basic and acidic residues; that stretch reads QEPEPEQPPRPEPHE. Residues 48-272 are a coiled coil; sequence CASEEAERHQ…QEKEELLYRV (225 aa). 2 positions are modified to phosphoserine: Ser-154 and Ser-241.

The protein belongs to the CCDC69 family. As to expression, highly expressed in duodenum, esophagus, pancreas, prostate, salivary gland, thymus and urinary bladder.

The protein localises to the cytoplasm. It is found in the cytoskeleton. Its subcellular location is the spindle. It localises to the midbody. Functionally, may act as a scaffold to regulate the recruitment and assembly of spindle midzone components. Required for the localization of AURKB and PLK1 to the spindle midzone. In Homo sapiens (Human), this protein is Coiled-coil domain-containing protein 69.